A 464-amino-acid polypeptide reads, in one-letter code: Ubiquinone biosynthesis monooxygenase COQ6, mitochondrial (464 aa).

The N-terminal 24 residues, Met-1 to Leu-24, are a transit peptide targeting the mitochondrion.

It belongs to the UbiH/COQ6 family. Component of a multi-subunit COQ enzyme complex, composed of at least coq3, coq4, coq5, coq6, coq7 and coq9. Interacts with coq8b and coq7. Requires FAD as cofactor.

Its subcellular location is the mitochondrion inner membrane. The protein localises to the golgi apparatus. The protein resides in the cell projection. The enzyme catalyses a 4-hydroxy-3-(all-trans-polyprenyl)benzoate + 2 reduced [2Fe-2S]-[ferredoxin] + O2 + 2 H(+) = a 3,4-dihydroxy-5-(all-trans-polyprenyl)benzoate + 2 oxidized [2Fe-2S]-[ferredoxin] + H2O. It carries out the reaction a 2-methoxy-6-(all-trans-polyprenyl)phenol + 2 reduced [2Fe-2S]-[ferredoxin] + O2 + 2 H(+) = a 2-methoxy-6-(all-trans-polyprenyl)benzene-1,4-diol + 2 oxidized [2Fe-2S]-[ferredoxin] + H2O. It functions in the pathway cofactor biosynthesis; ubiquinone biosynthesis. In terms of biological role, FAD-dependent monooxygenase required for two non-consecutive steps during ubiquinone biosynthesis. Required for the C5-ring hydroxylation during ubiquinone biosynthesis by catalyzing the hydroxylation of 4-hydroxy-3-(all-trans-polyprenyl)benzoic acid to 3,4-dihydroxy-5-(all-trans-polyprenyl)benzoic acid. Also acts downstream of coq4, for the C1-hydroxylation during ubiquinone biosynthesis by catalyzing the hydroxylation of 2-methoxy-6-(all-trans-polyprenyl)phenol to 2-methoxy-6-(all-trans-polyprenyl)benzene-1,4-diol. The electrons required for the hydroxylation reaction are funneled indirectly to coq6 from NADPH via a ferredoxin/ferredoxin reductase system. In Xenopus tropicalis (Western clawed frog), this protein is Ubiquinone biosynthesis monooxygenase COQ6, mitochondrial.